The primary structure comprises 301 residues: Glycine--tRNA ligase alpha subunit (301 aa).

This sequence belongs to the class-II aminoacyl-tRNA synthetase family. In terms of assembly, tetramer of two alpha and two beta subunits.

The protein resides in the cytoplasm. The catalysed reaction is tRNA(Gly) + glycine + ATP = glycyl-tRNA(Gly) + AMP + diphosphate. The protein is Glycine--tRNA ligase alpha subunit of Bordetella avium (strain 197N).